The sequence spans 548 residues: Membrane protein insertase YidC (548 aa).

A helical transmembrane segment spans residues 6–26 (NLLVIALLFVSFMIWQAWEQD). The interval 28-55 (NPQPQAQQTTQTTTTAAGSAADQGVPAS) is disordered. Residues 30-50 (QPQAQQTTQTTTTAAGSAADQ) are compositionally biased toward low complexity. The next 4 helical transmembrane spans lie at 350 to 370 (FVGNWGFSIIIITFIVRGIMY), 420 to 440 (LGGCFPLLIQMPIFLALYYML), 458 to 478 (LSAQDPYYILPILMGVTMFFI), and 499 to 519 (PVIFTVFFLWFPSGLVLYYIV).

It belongs to the OXA1/ALB3/YidC family. Type 1 subfamily. Interacts with the Sec translocase complex via SecD. Specifically interacts with transmembrane segments of nascent integral membrane proteins during membrane integration.

The protein resides in the cell inner membrane. Functionally, required for the insertion and/or proper folding and/or complex formation of integral membrane proteins into the membrane. Involved in integration of membrane proteins that insert both dependently and independently of the Sec translocase complex, as well as at least some lipoproteins. Aids folding of multispanning membrane proteins. The chain is Membrane protein insertase YidC from Shigella boydii serotype 18 (strain CDC 3083-94 / BS512).